The sequence spans 1127 residues: Inactive phospholipase C-like protein 2 (1127 aa).

The segment covering 1-11 (MAECGRGGAAG) has biased composition (gly residues). The disordered stretch occupies residues 1–128 (MAECGRGGAA…KKTVSFSSMP (128 aa)). An N-acetylalanine modification is found at Ala-2. Phosphoserine is present on Ser-17. A compositionally biased stretch (low complexity) spans 19-31 (GPALGAKGALKAG). Positions 32–42 (VGEGGGGGGRL) are enriched in gly residues. Thr-84 carries the post-translational modification Phosphothreonine. In terms of domain architecture, PH spans 141-251 (NSMVEGSELK…WVTGLRYLIS (111 aa)). A PI-PLC X-box domain is found at 426–570 (QDMKQPLSHY…LKGKILIKAK (145 aa)). Thr-584 carries the phosphothreonine modification. One can recognise a PI-PLC Y-box domain in the interval 618–734 (LSELVSICKS…GYVLRPAIMR (117 aa)). In terms of domain architecture, C2 spans 734–863 (REEVSFFSAN…TGYRHVPLQS (130 aa)). Residues 1101–1127 (GTENADVQKPRRSLEVIPEKANDETGE) form a disordered region. Residues 1106 to 1127 (DVQKPRRSLEVIPEKANDETGE) are compositionally biased toward basic and acidic residues. Ser-1113 carries the post-translational modification Phosphoserine.

It localises to the cytoplasm. In terms of biological role, may play an role in the regulation of Ins(1,4,5)P3 around the endoplasmic reticulum. In Homo sapiens (Human), this protein is Inactive phospholipase C-like protein 2 (PLCL2).